Consider the following 358-residue polypeptide: DNA polymerase IV (358 aa).

Positions 4–185 (IIHVDMDCFY…LPLIKIPGVG (182 aa)) constitute a UmuC domain. 2 residues coordinate Mg(2+): D8 and D103. Residue E104 is part of the active site.

Belongs to the DNA polymerase type-Y family. In terms of assembly, monomer. Requires Mg(2+) as cofactor.

The protein localises to the cytoplasm. It carries out the reaction DNA(n) + a 2'-deoxyribonucleoside 5'-triphosphate = DNA(n+1) + diphosphate. Functionally, poorly processive, error-prone DNA polymerase involved in untargeted mutagenesis. Copies undamaged DNA at stalled replication forks, which arise in vivo from mismatched or misaligned primer ends. These misaligned primers can be extended by PolIV. Exhibits no 3'-5' exonuclease (proofreading) activity. May be involved in translesional synthesis, in conjunction with the beta clamp from PolIII. The sequence is that of DNA polymerase IV from Shewanella pealeana (strain ATCC 700345 / ANG-SQ1).